The primary structure comprises 191 residues: Fe/S biogenesis protein NfuA (191 aa).

[4Fe-4S] cluster-binding residues include cysteine 149 and cysteine 152.

It belongs to the NfuA family. As to quaternary structure, homodimer. [4Fe-4S] cluster is required as a cofactor.

Its function is as follows. Involved in iron-sulfur cluster biogenesis. Binds a 4Fe-4S cluster, can transfer this cluster to apoproteins, and thereby intervenes in the maturation of Fe/S proteins. Could also act as a scaffold/chaperone for damaged Fe/S proteins. In Escherichia coli O139:H28 (strain E24377A / ETEC), this protein is Fe/S biogenesis protein NfuA.